The following is a 290-amino-acid chain: 33 kDa chaperonin (290 aa).

Disulfide bonds link cysteine 235-cysteine 237 and cysteine 268-cysteine 271.

It belongs to the HSP33 family. In terms of processing, under oxidizing conditions two disulfide bonds are formed involving the reactive cysteines. Under reducing conditions zinc is bound to the reactive cysteines and the protein is inactive.

The protein resides in the cytoplasm. In terms of biological role, redox regulated molecular chaperone. Protects both thermally unfolding and oxidatively damaged proteins from irreversible aggregation. Plays an important role in the bacterial defense system toward oxidative stress. The polypeptide is 33 kDa chaperonin (Streptococcus pyogenes serotype M4 (strain MGAS10750)).